Consider the following 517-residue polypeptide: Crotonobetaine/carnitine--CoA ligase (517 aa).

Belongs to the ATP-dependent AMP-binding enzyme family.

It catalyses the reaction 4-(trimethylamino)butanoate + ATP + CoA = 4-(trimethylamino)butanoyl-CoA + AMP + diphosphate. It carries out the reaction crotonobetaine + ATP + CoA = crotonobetainyl-CoA + AMP + diphosphate. The catalysed reaction is (R)-carnitine + ATP + CoA = (R)-carnitinyl-CoA + AMP + diphosphate. It participates in amine and polyamine metabolism; carnitine metabolism. Functionally, catalyzes the transfer of CoA to carnitine, generating the initial carnitinyl-CoA needed for the CaiB reaction cycle. Also has activity toward crotonobetaine and gamma-butyrobetaine. In Escherichia coli O127:H6 (strain E2348/69 / EPEC), this protein is Crotonobetaine/carnitine--CoA ligase.